Consider the following 173-residue polypeptide: Invasion protein B homolog BruAb1_0366 (173 aa).

Residues Met1 to Ala23 form the signal peptide.

The protein belongs to the IalB family.

The polypeptide is Invasion protein B homolog BruAb1_0366 (Brucella abortus biovar 1 (strain 9-941)).